The following is a 408-amino-acid chain: Arginine biosynthesis bifunctional protein ArgJ (408 aa).

The substrate site is built by T156, K182, T193, E279, N403, and S408. T193 (nucleophile) is an active-site residue.

It belongs to the ArgJ family. As to quaternary structure, heterotetramer of two alpha and two beta chains.

The protein resides in the cytoplasm. The catalysed reaction is N(2)-acetyl-L-ornithine + L-glutamate = N-acetyl-L-glutamate + L-ornithine. It catalyses the reaction L-glutamate + acetyl-CoA = N-acetyl-L-glutamate + CoA + H(+). It participates in amino-acid biosynthesis; L-arginine biosynthesis; L-ornithine and N-acetyl-L-glutamate from L-glutamate and N(2)-acetyl-L-ornithine (cyclic): step 1/1. The protein operates within amino-acid biosynthesis; L-arginine biosynthesis; N(2)-acetyl-L-ornithine from L-glutamate: step 1/4. Catalyzes two activities which are involved in the cyclic version of arginine biosynthesis: the synthesis of N-acetylglutamate from glutamate and acetyl-CoA as the acetyl donor, and of ornithine by transacetylation between N(2)-acetylornithine and glutamate. This is Arginine biosynthesis bifunctional protein ArgJ from Bordetella bronchiseptica (strain ATCC BAA-588 / NCTC 13252 / RB50) (Alcaligenes bronchisepticus).